A 966-amino-acid polypeptide reads, in one-letter code: Probable transport protein MmpL11 (966 aa).

12 helical membrane-spanning segments follow: residues 13-33 (WLVF…AMTQ), 188-208 (IILM…IPLA), 214-234 (VVIT…SVFV), 235-255 (TSTV…FILM), 279-299 (GLAV…IYLI), 311-331 (AILA…AVLA), 373-393 (ALAA…MVLG), 527-547 (TQPL…LISI), 557-577 (VLMT…VFQW), 595-615 (VPPL…IFLL), 646-666 (AALI…PLVA), and 668-688 (IGVA…LVLV).

The protein belongs to the resistance-nodulation-cell division (RND) (TC 2.A.6) family. MmpL subfamily.

It is found in the cell membrane. The protein is Probable transport protein MmpL11 (mmpL11) of Mycobacterium bovis (strain ATCC BAA-935 / AF2122/97).